We begin with the raw amino-acid sequence, 483 residues long: Iron-sulfur cluster assembly SufBD family protein ycf24 (483 aa).

Belongs to the iron-sulfur cluster assembly SufBD family.

The protein localises to the plastid. Its subcellular location is the chloroplast. In Guillardia theta (Cryptophyte), this protein is Iron-sulfur cluster assembly SufBD family protein ycf24 (ycf24).